We begin with the raw amino-acid sequence, 1003 residues long: Methyl-CpG-binding domain protein 6 (1003 aa).

Residues 13 to 83 (AGGPAATPVP…KVFNFDPLAP (71 aa)) form the MBD domain. The tract at residues 59 to 70 (DGTCKCGLECPL) is required for interaction with ASXL1/2/3. Disordered stretches follow at residues 123-222 (CSHS…PPPA), 241-302 (VPSD…ATMH), 334-619 (AKAQ…SAPP), 631-659 (ALGPTAGDGEGSAEGAGGPNGEPFSGLGD), 684-736 (ASLD…PQLL), and 753-1003 (SSPG…KLAP). Pro residues-rich tracts occupy residues 142–157 (PGPPSVRPPCRAPPTT) and 168–196 (QDPPSVPQAFPPLTGPAGLFPPPRLPDPV). Residues 252 to 262 (HASSSPPSDSP) show a composition bias toward low complexity. The segment covering 273-293 (PPLPPSNNPPGPPGPPGPATQ) has biased composition (pro residues). Over residues 351–363 (AQAPSAAHASPRP) the composition is skewed to low complexity. Positions 393–409 (APAPVPQPFPLPEPSQP) are enriched in pro residues. The segment covering 410-428 (ILPSVLSLLGLPTPGPSHS) has biased composition (low complexity). Pro residues predominate over residues 441-458 (LPPPPALSSGSPPQPRHP). Low complexity-rich tracts occupy residues 462–500 (SLPGTTSGSLSSVPGAPAPPAASKAPVVPSPVLQSPSDG) and 533–550 (GAGFPGMLGALPLPLSLG). Pro residues predominate over residues 571–590 (QPPPEPLLPPPGGPGPPSAP). The segment covering 591 to 604 (GEPEGPSLLVASLL) has biased composition (low complexity). Pro residues predominate over residues 605–618 (SPPPSDLLPPPSAP). The span at 636–650 (AGDGEGSAEGAGGPN) shows a compositional bias: gly residues. Residues 708 to 719 (TSSVTTATTDPG) are compositionally biased toward polar residues. Positions 768–798 (LLSSQLGLQLLPGGGAPPALSEASSPLACLL) are enriched in low complexity. Residues 805–817 (PEQPDAPCLPPES) are compositionally biased toward pro residues. Low complexity predominate over residues 818-837 (PASALEPEPARPPLSALAPP). The segment covering 947 to 958 (RKSRRGRRRKYN) has biased composition (basic residues). The span at 960 to 969 (ARNSSSSRQD) shows a compositional bias: polar residues. Residues 989–1003 (RPGRPAKNKRRKLAP) show a composition bias toward basic residues.

Core component of the polycomb repressive deubiquitinase (PR-DUB) complex, at least composed of BAP1, one of ASXL1, ASXL2 or (probably) ASXL3, and one of MBD5 or MBD6. Distinct combinations of ASXL and MBD proteins may preferentially bind specific histone modification marks. The PR-DUB core associates with a number of accessory proteins, including FOXK1, FOXK2, KDM1B, HCFC1 and OGT; KDM1B specifically associates with ASXL2 PR-DUB complexes. Interacts (via MBD domain) with ASXL1, ASXL2 and ASXL3 (via PHD domain); the interaction is probably direct, mediates association with other PR-DUB complex core components. As to expression, expressed at highest levels in adult testis.

The protein resides in the nucleus. It localises to the chromosome. In terms of biological role, non-catalytic component of the polycomb repressive deubiquitinase (PR-DUB) complex, a complex that specifically mediates deubiquitination of histone H2A monoubiquitinated at 'Lys-120' (H2AK119ub1). Important for stability of PR-DUB components and stimulating its ubiquitinase activity. As part of the PR-DUB complex, associates with chromatin enriched in histone marks H3K4me1, H3K4me3, and H3K27Ac, but not in H3K27me3. MBD5 and MBD6 containing complexes associate with distinct chromatin regions enriched in genes involved in different pathways. Heterochromatin recruitment is not mediated by DNA methylation. The PR-DUB complex is an epigenetic regulator of gene expression, including genes involved in development, cell communication, signaling, cell proliferation and cell viability; may promote cancer cell growth. This Mus musculus (Mouse) protein is Methyl-CpG-binding domain protein 6 (Mbd6).